Consider the following 404-residue polypeptide: MEDSVLYSFYFWTYMQPNYYRVIKKATSFSGLEMISHAYGQIAGVEVVGFYLWLITEANIQAFNSEIRTPISRLQNAFNPFEIKKNQVSEWIYKTISKLESLGLVRTFFSPKRSEITFCIIDPLDWKEFKQNKQLKEKLVEAMGKVEYDRNCLAFDQIDNLQFDNALEISANFEVNFTANQSDVWFSFNFEELHKELVKNKLLISLDEKAKTLINGYFEKYKLSLQQITDCIINSSTQENELDFQKLEMMFFQIVKNDTAPILETVSNNKDFFYKNEILDESTKKAITDCHVNFNSEKYLFLLYGKIDESQLQLVRQLRSDYQLLDKVINLVLDFSFWKNNGMWREKYILKIAQSIKINNSQNSYEKTLNNFIRALTLNKKHSLNNIKPVEKTISFTEYFEFIK.

This is an uncharacterized protein from Mycoplasma genitalium (strain ATCC 33530 / DSM 19775 / NCTC 10195 / G37) (Mycoplasmoides genitalium).